Here is a 340-residue protein sequence, read N- to C-terminus: Phosphate acyltransferase (340 aa).

This sequence belongs to the PlsX family. Homodimer. Probably interacts with PlsY.

It localises to the cytoplasm. The catalysed reaction is a fatty acyl-[ACP] + phosphate = an acyl phosphate + holo-[ACP]. It functions in the pathway lipid metabolism; phospholipid metabolism. Its function is as follows. Catalyzes the reversible formation of acyl-phosphate (acyl-PO(4)) from acyl-[acyl-carrier-protein] (acyl-ACP). This enzyme utilizes acyl-ACP as fatty acyl donor, but not acyl-CoA. The sequence is that of Phosphate acyltransferase from Leptospira biflexa serovar Patoc (strain Patoc 1 / ATCC 23582 / Paris).